A 428-amino-acid chain; its full sequence is Flotillin-2 (428 aa).

Gly-2 carries the N-myristoyl glycine lipid modification. A lipid anchor (S-palmitoyl cysteine; by ZDHHC5) is attached at Cys-4. Residue Cys-19 is the site of S-palmitoyl cysteine attachment. A lipid anchor (S-palmitoyl cysteine; by ZDHHC5) is attached at Cys-20. Ser-405 is subject to Phosphoserine.

It belongs to the band 7/mec-2 family. Flotillin subfamily. As to quaternary structure, heterooligomeric complex of flotillin-1 and flotillin-2 and caveolin-1 and caveolin-2. Interacts with ECPAS. Post-translationally, ZDHHC5-catalyzed palmitoylation may be required for the formation of higher-order complexes and for neurite outgrowth in cultured neural stem cells.

The protein resides in the cell membrane. It localises to the membrane. It is found in the caveola. The protein localises to the endosome. Functionally, may act as a scaffolding protein within caveolar membranes, functionally participating in formation of caveolae or caveolae-like vesicles. May be involved in epidermal cell adhesion and epidermal structure and function. The polypeptide is Flotillin-2 (FLOT2) (Bos taurus (Bovine)).